The chain runs to 553 residues: MRYARHASRYSLFTLAVSAALLPGAGWAANGDLAGARKPPSVACSWNREAALSYEERRLDTPLPFSGANVVTHDQTPLAERIVKGAGFDGFEPAFAKRLCAADGRTPVTSYAKALKLVTEEGRALWRAAVDRAQGRRAIPAGALPASDDRMLYWTRLYMTRTLRQWAPSFHLGKAQAQALQWRFERASRGQLDIDLPRRYAADGSRYRRMIISGFDVFTLGTPGTANTGLRNGNPSGATALALDGREFRLADGSLLRIEAYLLPVSYDPFNRGMQEDTLGPWFRPGPRRVDASITISQGGANQFWLEAWNGRFHGSSAGNDGIVYCPADSALPNYVLPLGSVTNPGTAPISLRGSGCNINPPRRWLGYDSASRWRQNLPAQFSKASLPVRQLLAADTWRGIERPPGATSQAAEGFDVTWHTNYDFFPDCANPRTENVPTNGVMNAMPDPSLVLPPNRRICARNGGGGDYLSNESAYRNTVLRDAFRLEIPAGHIHVPVMNNYYTGVPASGGGARNDNAISDARYEAYRSAIVAQTRALLVGVGNALAQGAQAD.

An N-terminal signal peptide occupies residues 1–28 (MRYARHASRYSLFTLAVSAALLPGAGWA).

This is an uncharacterized protein from Pseudomonas aeruginosa (strain ATCC 15692 / DSM 22644 / CIP 104116 / JCM 14847 / LMG 12228 / 1C / PRS 101 / PAO1).